A 473-amino-acid polypeptide reads, in one-letter code: 3-isopropylmalate dehydratase large subunit (473 aa).

The segment at 289-319 (TVTWGTTPGQTAGITEPIPDPDDLPEEDRDT) is disordered. A compositionally biased stretch (polar residues) spans 291-301 (TWGTTPGQTAG). Acidic residues predominate over residues 307–317 (PDPDDLPEEDR). [4Fe-4S] cluster-binding residues include Cys348, Cys408, and Cys411.

It belongs to the aconitase/IPM isomerase family. LeuC type 1 subfamily. In terms of assembly, heterodimer of LeuC and LeuD. The cofactor is [4Fe-4S] cluster.

It carries out the reaction (2R,3S)-3-isopropylmalate = (2S)-2-isopropylmalate. Its pathway is amino-acid biosynthesis; L-leucine biosynthesis; L-leucine from 3-methyl-2-oxobutanoate: step 2/4. Its function is as follows. Catalyzes the isomerization between 2-isopropylmalate and 3-isopropylmalate, via the formation of 2-isopropylmaleate. The chain is 3-isopropylmalate dehydratase large subunit from Halorubrum lacusprofundi (strain ATCC 49239 / DSM 5036 / JCM 8891 / ACAM 34).